The following is a 1336-amino-acid chain: SH3 domain and tetratricopeptide repeat-containing protein 1 (1336 aa).

At M1 the chain carries N-acetylmethionine. 2 disordered regions span residues 1–76 and 225–266; these read MENL…PPCQ and TGPR…SEEV. A compositionally biased stretch (gly residues) spans 18–27; it reads GPVGPSGGGS. Residues 46–61 show a composition bias toward basic and acidic residues; the sequence is AGPEEAKAPVRGDEAP. Composition is skewed to low complexity over residues 62 to 74 and 247 to 266; these read PARV…GTPP and EAAP…SEEV. Positions 305 to 368 constitute an SH3 domain; that stretch reads MAVGLASALA…RSSLISMQGP (64 aa). 8 TPR repeats span residues 560-593, 601-634, 665-698, 786-819, 863-896, 946-979, 1027-1063, and 1192-1225; these read ARLC…LEGS, VAVY…LLGT, ARAC…HRDS, GPLY…SAIA, GVIA…ARDL, THVL…AVEM, GQLL…FIDL, and RVAY…CNSP. The residue at position 1248 (Y1248) is a Phosphotyrosine. The stretch at 1277–1311 is one TPR 9 repeat; that stretch reads LKIYTRLATIYHNFLLDREKSLFFYQKARTFATEL.

The sequence is that of SH3 domain and tetratricopeptide repeat-containing protein 1 (SH3TC1) from Homo sapiens (Human).